The following is a 147-amino-acid chain: Deoxyuridine 5'-triphosphate nucleotidohydrolase (147 aa).

R24 is a Mg(2+) binding site. DUTP contacts are provided by residues 68–70, 82–85, Y88, G93, I95, and R111; these read PRS and GVID.

This sequence belongs to the dUTPase family. The cofactor is Mg(2+).

It carries out the reaction dUTP + H2O = dUMP + diphosphate + H(+). This enzyme is involved in nucleotide metabolism: it produces dUMP, the immediate precursor of thymidine nucleotides and it decreases the intracellular concentration of dUTP so that uracil cannot be incorporated into DNA. In Oryctolagus cuniculus (Rabbit), this protein is Deoxyuridine 5'-triphosphate nucleotidohydrolase (OPG046).